The sequence spans 301 residues: Probable alpha-L-glutamate ligase (301 aa).

In terms of domain architecture, ATP-grasp spans 104–287; it reads LQLLSRRGIG…VAGMIIEYLE (184 aa). ATP-binding positions include Lys141, 178–179, Asp187, and 211–213; these read EY and RSN. Positions 248, 260, and 262 each coordinate Mg(2+). Mn(2+) is bound by residues Asp248, Glu260, and Asn262.

Belongs to the RimK family. The cofactor is Mg(2+). It depends on Mn(2+) as a cofactor.

The protein is Probable alpha-L-glutamate ligase of Pseudomonas savastanoi pv. phaseolicola (strain 1448A / Race 6) (Pseudomonas syringae pv. phaseolicola (strain 1448A / Race 6)).